A 368-amino-acid polypeptide reads, in one-letter code: DNA replication and repair protein RecF (368 aa).

Gly-30–Thr-37 contributes to the ATP binding site.

It belongs to the RecF family.

The protein localises to the cytoplasm. The RecF protein is involved in DNA metabolism; it is required for DNA replication and normal SOS inducibility. RecF binds preferentially to single-stranded, linear DNA. It also seems to bind ATP. The sequence is that of DNA replication and repair protein RecF from Trichlorobacter lovleyi (strain ATCC BAA-1151 / DSM 17278 / SZ) (Geobacter lovleyi).